Reading from the N-terminus, the 447-residue chain is MPDVESFWHSLEEAYQAILSAPSFDAWIKTTRPLKLDNNQLWLEVPSAVHRDYWEKNLSAKIVETGFKLTGAEVMPHFVVADEKDAALAQELEEPAEEEVVFSEQSKKAMLNPKYTFDTFVIGKGNQMAHAAALVVAEDPGSIYNPLFFYGGVGLGKTHLMHAIGHQMLVNQPDAKVKYVSSETFTNEFINSIQTKTSEQFRKEYRNVDLLLVDDIQFLAEKEATLEEFFHTFNDLYNENKQIVLTSDRPPNDIPKLPERLVSRFAWGLSVDITPPDLETRIAILRKKADAERLEIPDDTLSYIAGQIDSNIRELEGALVRVQAFATINGEDITTSLAADALKSLKSVGSKNQLSILQIQEEVSKYYHVPLKDLKGKKRVKTIVVPRQISMYLAREMTDNSLPKIGAEFGGKDHTTVIHAHEKIQQLLEKDPAIQKEVSEIKNLLNS.

The segment at methionine 1–valine 74 is domain I, interacts with DnaA modulators. The interval valine 74–alanine 109 is domain II. The tract at residues methionine 110–alanine 326 is domain III, AAA+ region. ATP contacts are provided by glycine 154, glycine 156, lysine 157, and threonine 158. The segment at threonine 327–serine 447 is domain IV, binds dsDNA.

It belongs to the DnaA family. As to quaternary structure, oligomerizes as a right-handed, spiral filament on DNA at oriC.

The protein localises to the cytoplasm. Plays an essential role in the initiation and regulation of chromosomal replication. ATP-DnaA binds to the origin of replication (oriC) to initiate formation of the DNA replication initiation complex once per cell cycle. Binds the DnaA box (a 9 base pair repeat at the origin) and separates the double-stranded (ds)DNA. Forms a right-handed helical filament on oriC DNA; dsDNA binds to the exterior of the filament while single-stranded (ss)DNA is stabiized in the filament's interior. The ATP-DnaA-oriC complex binds and stabilizes one strand of the AT-rich DNA unwinding element (DUE), permitting loading of DNA polymerase. After initiation quickly degrades to an ADP-DnaA complex that is not apt for DNA replication. Binds acidic phospholipids. Functionally, strand separation requires the DnaA boxes and adjacent DnaA-trio motifs as well as ATP. This chain is Chromosomal replication initiator protein DnaA, found in Enterococcus faecalis (strain ATCC 700802 / V583).